The chain runs to 361 residues: S-adenosylmethionine decarboxylase proenzyme (361 aa).

Active-site residues include E13 and E16. S73 functions as the Schiff-base intermediate with substrate; via pyruvic acid in the catalytic mechanism. S73 is subject to Pyruvic acid (Ser); by autocatalysis. C87 (proton donor; for catalytic activity) is an active-site residue. Active-site proton acceptor; for processing activity residues include S236 and H249.

Belongs to the eukaryotic AdoMetDC family. Requires pyruvate as cofactor. Is synthesized initially as an inactive proenzyme. Formation of the active enzyme involves a self-maturation process in which the active site pyruvoyl group is generated from an internal serine residue via an autocatalytic post-translational modification. Two non-identical subunits are generated from the proenzyme in this reaction, and the pyruvate is formed at the N-terminus of the alpha chain, which is derived from the carboxyl end of the proenzyme. The post-translation cleavage follows an unusual pathway, termed non-hydrolytic serinolysis, in which the side chain hydroxyl group of the serine supplies its oxygen atom to form the C-terminus of the beta chain, while the remainder of the serine residue undergoes an oxidative deamination to produce ammonia and the pyruvoyl group blocking the N-terminus of the alpha chain.

The enzyme catalyses S-adenosyl-L-methionine + H(+) = S-adenosyl 3-(methylsulfanyl)propylamine + CO2. The protein operates within amine and polyamine biosynthesis; S-adenosylmethioninamine biosynthesis; S-adenosylmethioninamine from S-adenosyl-L-methionine: step 1/1. This is S-adenosylmethionine decarboxylase proenzyme (SAMDC) from Nicotiana tabacum (Common tobacco).